We begin with the raw amino-acid sequence, 103 residues long: Alkanal monooxygenase alpha chain (103 aa).

In terms of assembly, heterodimer of an alpha and a beta chain.

It catalyses the reaction a long-chain fatty aldehyde + FMNH2 + O2 = a long-chain fatty acid + hnu + FMN + H2O + 2 H(+). Light-emitting reaction in luminous bacteria. This Vibrio cholerae protein is Alkanal monooxygenase alpha chain (luxA).